The sequence spans 240 residues: Membrane-spanning 4-domains subfamily A member 15 (240 aa).

The next 4 helical transmembrane spans lie at 73 to 93, 100 to 120, 144 to 164, and 173 to 193; these read VLGT…SVLL, VGIF…FIIS, ILSV…FGVT, and LAVL…AMHF.

Belongs to the MS4A family.

The protein localises to the membrane. In terms of biological role, may be involved in signal transduction as a component of a multimeric receptor complex. The protein is Membrane-spanning 4-domains subfamily A member 15 (MS4A15) of Homo sapiens (Human).